The following is a 440-amino-acid chain: Protein CANDIDATE G-PROTEIN COUPLED RECEPTOR 7 (440 aa).

The signal sequence occupies residues 1–24 (MAKMPLSVVVFLLFSAAFLAVSMA). N124 and N162 each carry an N-linked (GlcNAc...) asparagine glycan. 5 consecutive transmembrane segments (helical) span residues 175 to 195 (LPTL…FWSY), 207 to 227 (IHLL…CAAE), 243 to 263 (ILFY…IILI), 281 to 301 (VLII…VIGE), and 315 to 335 (VFLL…VWSI). The N-linked (GlcNAc...) asparagine glycan is linked to N351. Helical transmembrane passes span 363-383 (IVVI…KTIA) and 390-410 (VSFA…FHMF).

The protein belongs to the LU7TM family.

The protein localises to the membrane. In terms of biological role, plays a role in plants and microbes interactions. G-protein coupled receptor involved in root growth mediated by the bacterial quorum-sensing signals N-acyl-homoserine lactones (AHLs). In Arabidopsis thaliana (Mouse-ear cress), this protein is Protein CANDIDATE G-PROTEIN COUPLED RECEPTOR 7.